A 154-amino-acid polypeptide reads, in one-letter code: 17.6 kDa class I heat shock protein (154 aa).

The sHSP domain maps to 40 to 154 (ETSAFANTRI…PDVKSIEISG (115 aa)).

Belongs to the small heat shock protein (HSP20) family. As to quaternary structure, forms oligomeric structures.

It localises to the cytoplasm. In Solanum peruvianum (Peruvian tomato), this protein is 17.6 kDa class I heat shock protein.